The sequence spans 110 residues: Ribonuclease P protein component (110 aa).

This sequence belongs to the RnpA family. Consists of a catalytic RNA component (M1 or rnpB) and a protein subunit.

It catalyses the reaction Endonucleolytic cleavage of RNA, removing 5'-extranucleotides from tRNA precursor.. Its function is as follows. RNaseP catalyzes the removal of the 5'-leader sequence from pre-tRNA to produce the mature 5'-terminus. It can also cleave other RNA substrates such as 4.5S RNA. The protein component plays an auxiliary but essential role in vivo by binding to the 5'-leader sequence and broadening the substrate specificity of the ribozyme. This chain is Ribonuclease P protein component, found in Mesoplasma florum (strain ATCC 33453 / NBRC 100688 / NCTC 11704 / L1) (Acholeplasma florum).